Reading from the N-terminus, the 263-residue chain is UPF0739 protein C1orf74 homolog (263 aa).

Belongs to the UPF0739 family.

This is UPF0739 protein C1orf74 homolog from Bos taurus (Bovine).